A 312-amino-acid chain; its full sequence is Malate dehydrogenase (312 aa).

NAD(+) is bound by residues 7–13 (GAAGGIG) and D34. R81 and R87 together coordinate substrate. Residues N94 and 117-119 (ITN) contribute to the NAD(+) site. Residues N119 and R153 each contribute to the substrate site. H177 (proton acceptor) is an active-site residue. Residue M227 participates in NAD(+) binding.

Belongs to the LDH/MDH superfamily. MDH type 1 family. Homodimer.

It catalyses the reaction (S)-malate + NAD(+) = oxaloacetate + NADH + H(+). Catalyzes the reversible oxidation of malate to oxaloacetate. This is Malate dehydrogenase from Yersinia pseudotuberculosis serotype O:1b (strain IP 31758).